Reading from the N-terminus, the 876-residue chain is Alanine--tRNA ligase (876 aa).

Zn(2+)-binding residues include H565, H569, C667, and H671.

This sequence belongs to the class-II aminoacyl-tRNA synthetase family. Zn(2+) serves as cofactor.

The protein localises to the cytoplasm. The enzyme catalyses tRNA(Ala) + L-alanine + ATP = L-alanyl-tRNA(Ala) + AMP + diphosphate. Functionally, catalyzes the attachment of alanine to tRNA(Ala) in a two-step reaction: alanine is first activated by ATP to form Ala-AMP and then transferred to the acceptor end of tRNA(Ala). Also edits incorrectly charged Ser-tRNA(Ala) and Gly-tRNA(Ala) via its editing domain. This is Alanine--tRNA ligase from Staphylococcus aureus (strain USA300).